Reading from the N-terminus, the 223-residue chain is UPF0441 protein YgiB (223 aa).

Positions 178 to 195 are enriched in low complexity; the sequence is TVPKTAMAPKPATTTTVT. The segment at 178–223 is disordered; sequence TVPKTAMAPKPATTTTVTRGGFGESVAKQSTMQRSAAGTSTRSMGG. A compositionally biased stretch (polar residues) spans 204-223; that stretch reads AKQSTMQRSAAGTSTRSMGG.

Belongs to the UPF0441 family.

In Salmonella heidelberg (strain SL476), this protein is UPF0441 protein YgiB.